The sequence spans 73 residues: Aldehyde dehydrogenase (73 aa).

Belongs to the aldehyde dehydrogenase family.

It carries out the reaction an aldehyde + NAD(+) + H2O = a carboxylate + NADH + 2 H(+). Its pathway is alcohol metabolism; ethanol degradation; acetate from ethanol: step 2/2. This chain is Aldehyde dehydrogenase, found in Geobacillus stearothermophilus (Bacillus stearothermophilus).